The primary structure comprises 173 residues: Translation initiation factor IF-3 (173 aa).

Belongs to the IF-3 family. As to quaternary structure, monomer.

The protein resides in the cytoplasm. Its function is as follows. IF-3 binds to the 30S ribosomal subunit and shifts the equilibrium between 70S ribosomes and their 50S and 30S subunits in favor of the free subunits, thus enhancing the availability of 30S subunits on which protein synthesis initiation begins. The polypeptide is Translation initiation factor IF-3 (Caulobacter vibrioides (strain ATCC 19089 / CIP 103742 / CB 15) (Caulobacter crescentus)).